The chain runs to 431 residues: UDP-N-acetylglucosamine 1-carboxyvinyltransferase (431 aa).

24 to 25 (KN) provides a ligand contact to phosphoenolpyruvate. Arg-95 is a UDP-N-acetyl-alpha-D-glucosamine binding site. Asp-119 serves as the catalytic Proton donor. Positions 314 and 336 each coordinate UDP-N-acetyl-alpha-D-glucosamine.

This sequence belongs to the EPSP synthase family. MurA subfamily.

It is found in the cytoplasm. The catalysed reaction is phosphoenolpyruvate + UDP-N-acetyl-alpha-D-glucosamine = UDP-N-acetyl-3-O-(1-carboxyvinyl)-alpha-D-glucosamine + phosphate. It functions in the pathway cell wall biogenesis; peptidoglycan biosynthesis. In terms of biological role, cell wall formation. Adds enolpyruvyl to UDP-N-acetylglucosamine. This chain is UDP-N-acetylglucosamine 1-carboxyvinyltransferase, found in Bradyrhizobium diazoefficiens (strain JCM 10833 / BCRC 13528 / IAM 13628 / NBRC 14792 / USDA 110).